The sequence spans 1011 residues: Histone deacetylase 9 (1011 aa).

Position 22 is a phosphoserine (Ser22). Positions 23 to 27 are interaction with CTBP1; that stretch reads PLDLR. Disordered regions lie at residues 110–139, 183–249, and 262–304; these read RQEQ…RAVA, TSLD…KDGN, and TESS…EQMV. The interaction with MEF2 stretch occupies residues 136-154; the sequence is RAVASTEVKQKLQEFLLSK. Positions 175–343 are interaction with MAPK10; the sequence is LWYTAAHHTS…LPAVPSQLNA (169 aa). The segment covering 185 to 199 has biased composition (polar residues); that stretch reads LDQSSPPLSGTSPSY. The segment covering 208-219 has biased composition (basic and acidic residues); the sequence is DAKDDFPLRKTA. Residues 218-261 are interaction with ETV6; the sequence is TASEPNLKVRSRLKQKVAERRSSPLLRRKDGNVVTSFKKRMFEV. 2 positions are modified to phosphoserine: Ser220 and Ser240. Positions 233–248 are enriched in basic and acidic residues; it reads KVAERRSSPLLRRKDG. Over residues 262-285 the composition is skewed to low complexity; the sequence is TESSVSSSSPGSGPSSPNNGPTGS. Residue Ser451 is modified to Phosphoserine. The disordered stretch occupies residues 494–536; sequence QLKQPGSHLEEAEEELQGDQAMQEDRAPSSGNSTRSDSSACVD. The segment covering 522 to 532 has biased composition (polar residues); the sequence is SSGNSTRSDSS. Ser554 is subject to Phosphoserine. The tract at residues 631–978 is histone deacetylase; the sequence is SATGIAYDPL…VNALLGNELE (348 aa). Cys646, Cys648, His654, and Cys731 together coordinate Zn(2+). Residue His783 is part of the active site.

Belongs to the histone deacetylase family. HD type 2 subfamily. In terms of assembly, homodimer. Interacts with CTBP1. The phosphorylated form interacts with 14-3-3. Interacts with HDAC1 and HDAC3, and probably with HDAC4 and HDAC5. Interacts with MEF2, MAPK10, ETV6, NCOR1 and BCL6. Interacts with FOXP3 in the absence of T-cell stimulation. Phosphorylated on Ser-220 and Ser-450; which promotes 14-3-3-binding, impairs interaction with MEF2, and antagonizes antimyogenic activity. Phosphorylated on Ser-240; which impairs nuclear accumulation. Isoform 7 is phosphorylated on Tyr-1010. Phosphorylated by the PKC kinases PKN1 and PKN2, impairing nuclear import. Post-translationally, sumoylated. As to expression, broadly expressed, with highest levels in brain, heart, muscle and testis. Isoform 3 is present in human bladder carcinoma cells (at protein level).

It is found in the nucleus. It catalyses the reaction N(6)-acetyl-L-lysyl-[histone] + H2O = L-lysyl-[histone] + acetate. With respect to regulation, inhibited by Trichostatin A (TSA) and suberoylanilide hydroxamic acid. Its function is as follows. Responsible for the deacetylation of lysine residues on the N-terminal part of the core histones (H2A, H2B, H3 and H4). Histone deacetylation gives a tag for epigenetic repression and plays an important role in transcriptional regulation, cell cycle progression and developmental events. Represses MEF2-dependent transcription. Isoform 3 lacks active site residues and therefore is catalytically inactive. Represses MEF2-dependent transcription by recruiting HDAC1 and/or HDAC3. Seems to inhibit skeletal myogenesis and to be involved in heart development. Protects neurons from apoptosis, both by inhibiting JUN phosphorylation by MAPK10 and by repressing JUN transcription via HDAC1 recruitment to JUN promoter. In Homo sapiens (Human), this protein is Histone deacetylase 9 (HDAC9).